A 3021-amino-acid chain; its full sequence is Genome polyprotein (3021 aa).

An N-acetylserine; by host modification is found at Ser-2. The tract at residues 2–23 is interaction with STAT1; that stretch reads STLPKPQRKTKRNTIRRPQDVK. Residues 2-58 form an interaction with EIF2AK2/PKR region; that stretch reads STLPKPQRKTKRNTIRRPQDVKFPGGGVIYVGVYVLPRRGPRLGVRATRKTSERSQP. Residues 2–59 are interaction with DDX3X; sequence STLPKPQRKTKRNTIRRPQDVKFPGGGVIYVGVYVLPRRGPRLGVRATRKTSERSQPR. Positions 2 to 75 are disordered; that stretch reads STLPKPQRKT…PKARRSEGRS (74 aa). At 2 to 168 the chain is on the cytoplasmic side; it reads STLPKPQRKT…EDGINFATGN (167 aa). Short sequence motifs (nuclear localization signal) lie at residues 5–13 and 38–43; these read PKPQRKTKR and PRRGPR. Residues 7-16 show a composition bias toward basic residues; the sequence is PQRKTKRNTI. Residue Ser-53 is modified to Phosphoserine; by host. Short sequence motifs (nuclear localization signal) lie at residues 58 to 64 and 66 to 71; these read PRGRRKP and PKARRS. Residues 58–68 show a composition bias toward basic residues; it reads PRGRRKPIPKA. 2 positions are modified to phosphoserine; by host: Ser-99 and Ser-116. The tract at residues 112 to 152 is important for endoplasmic reticulum and mitochondrial localization; the sequence is PRRRSRNLGKVIDTLTCGFADLMGYIPLVGAPLGGAARALA. The interaction with APOA2 stretch occupies residues 122–173; it reads VIDTLTCGFADLMGYIPLVGAPLGGAARALAHGVRALEDGINFATGNLPGCS. Residues 164-167 form an important for lipid droplets localization region; that stretch reads FATG. A helical membrane pass occupies residues 169 to 189; sequence LPGCSFSIFLLALFSCLIHPA. The propeptide at 178 to 191 is ER anchor for the core protein, removed in mature form by host signal peptidase; it reads LLALFSCLIHPAAS. Residues 190–358 are Lumenal-facing; it reads ASLEWRNTSG…AGAHWGIIAG (169 aa). Asn-196, Asn-209, and Asn-234 each carry an N-linked (GlcNAc...) asparagine; by host glycan. The segment at 265-296 is important for fusion; it reads LVGAGTMCSALYVGDMCGPVFLVGQAFTFRPR. Asn-305 is a glycosylation site (N-linked (GlcNAc...) asparagine; by host). Residues 359-379 traverse the membrane as a helical segment; it reads LAYYSMQGNWAKVAIIMVMFS. Topologically, residues 380 to 731 are lumenal; that stretch reads GVDASTHVTA…WEFVILIFLL (352 aa). The interval 385–412 is HVR1; that stretch reads THVTAGQAARNAYGITSLFSVGAKQNLQ. Residues Asn-417, Asn-423, and Asn-430 are each glycosylated (N-linked (GlcNAc...) (high mannose) asparagine; by host). 4 disulfides stabilise this stretch: Cys-429–Cys-553, Cys-452–Cys-459, Cys-487–Cys-495, and Cys-504–Cys-509. N-linked (GlcNAc...) asparagine; by host glycosylation is present at Asn-448. An HVR2 region spans residues 475-479; it reads ANITG. N-linked (GlcNAc...) asparagine; by host glycosylation is present at Asn-476. A CD81-binding 1 region spans residues 481 to 494; it reads SDDKPYCWHYAPRP. N-linked (GlcNAc...) asparagine; by host glycosylation occurs at Asn-533. The CD81-binding 2 stretch occupies residues 545-552; sequence PPSGRWFG. Residue Asn-557 is glycosylated (N-linked (GlcNAc...) asparagine; by host). 4 disulfides stabilise this stretch: Cys-565–Cys-570, Cys-587–Cys-591, Cys-603–Cys-626, and Cys-613–Cys-650. N-linked (GlcNAc...) (high mannose) asparagine; by host glycosylation is found at Asn-629 and Asn-651. Cys-658 and Cys-683 are joined by a disulfide. Residues 666-677 form a PKR/eIF2-alpha phosphorylation homology domain (PePHD) region; the sequence is SEQHPLLHSTTE. A helical membrane pass occupies residues 732–752; it reads LADARVCVALWLILTISQAEA. The Lumenal portion of the chain corresponds to 753–763; it reads ALENLVTLNAV. The chain crosses the membrane as a helical span at residues 764–784; it reads AAAGTHGIGWYLVAFCAAWYV. The Cytoplasmic portion of the chain corresponds to 785–787; it reads RGK. The chain crosses the membrane as a helical span at residues 788-809; sequence LVPLVTYSLTGLWSLALLVLLL. Residues 810 to 819 lie on the Lumenal side of the membrane; sequence PQRAYAWSGE. A helical membrane pass occupies residues 820–840; sequence DSATLGAGILVLFGFFTLSPW. The Cytoplasmic segment spans residues 841-844; the sequence is YKHW. The chain crosses the membrane as a helical span at residues 845–864; the sequence is IARLIWWNQYTICRCESALH. The Lumenal segment spans residues 865–887; it reads VWVPPLLARGGRDGVILLTSLLY. A helical transmembrane segment spans residues 888 to 908; the sequence is PSLIFDITKLLIAALGPLYLI. Residues 905 to 1032 enclose the Peptidase C18 domain; it reads LYLIQATITA…DYREMGWRLL (128 aa). Topologically, residues 909 to 1663 are cytoplasmic; the sequence is QATITATPYF…CMSADLEVTT (755 aa). The segment at 910–1212 is protease NS2-3; that stretch reads ATITATPYFV…PVETLSTQAR (303 aa). The S-palmitoyl cysteine; by host moiety is linked to residue Cys-928. Residues 935-955 form an interaction with host SCPS1 region; it reads MGGKYFQMIILSLADGSNTYL. Catalysis depends on for protease NS2 activity; shared with dimeric partner residues His-958, Glu-978, and Cys-999. The 182-residue stretch at 1033 to 1214 folds into the Peptidase S29 domain; that stretch reads APITAYAQQT…ETLSTQARSP (182 aa). Residues His-1089 and Asp-1113 each act as charge relay system; for serine protease NS3 activity in the active site. Zn(2+) contacts are provided by Cys-1129 and Cys-1131. The active-site Charge relay system; for serine protease NS3 activity is Ser-1171. Cys-1177 and His-1181 together coordinate Zn(2+). Residues 1223-1375 enclose the Helicase ATP-binding domain; sequence PAVPQSYQVG…SNIEEVALGS (153 aa). 1236–1243 provides a ligand contact to ATP; that stretch reads APTGSGKS. Ser-1243 provides a ligand contact to Mg(2+). A DECH box motif is present at residues 1322–1325; the sequence is DDCH. The Helicase C-terminal domain occupies 1382-1544; it reads YGKAIPIACI…DLQPAETTVR (163 aa). The interval 1492-1504 is RNA-binding; sequence QRRGRTGRGRLGT. Residues 1664 to 1684 form a helical membrane-spanning segment; the sequence is STWVLLGGVLAAVAAYCLSVG. The interval 1685-1696 is NS3-binding; it reads CVVIVGHIELGG. Residues 1685–1811 lie on the Cytoplasmic side of the membrane; that stretch reads CVVIVGHIEL…SVTSPLTTNQ (127 aa). The chain crosses the membrane as a helical span at residues 1812-1830; the sequence is TMFFNILGGWVATHLAGPQ. Residues 1831 to 1834 lie on the Lumenal side of the membrane; that stretch reads ASSA. Residues 1835-1855 traverse the membrane as a helical segment; sequence FVVSGLAGAAIGGIGLGRVLL. Asp-1856 is a topological domain (cytoplasmic). The helical transmembrane segment at 1857–1877 threads the bilayer; sequence ILAGYGAGVSGALVAFKIMGG. Over 1878 to 1887 the chain is Lumenal; that stretch reads EPPTTEDMVN. A helical transmembrane segment spans residues 1888-1908; it reads LLPAILSPGALVVGVICAAIL. The Cytoplasmic portion of the chain corresponds to 1909 to 1978; it reads RRHVGPGEGP…WINEDYPSPC (70 aa). Cys-1978 carries the S-palmitoyl cysteine; by host lipid modification. The stretch at 1979-2008 is an intramembrane region; sequence SGDWLRIIWDWVCSVVSDFKTWLSAKIMPA. At 2009–3000 the chain is on the cytoplasmic side; it reads LPGLPFISCQ…YHSVSRARTR (992 aa). Positions 2017, 2035, 2037, and 2058 each coordinate Zn(2+). The interval 2126–2214 is FKBP8-binding; the sequence is EFFTEVDGVR…ASSSASQLSA (89 aa). Residues 2126 to 2338 are transcriptional activation; that stretch reads EFFTEVDGVR…PVPPPRRKRT (213 aa). Residues 2141 to 2145 are interaction with non-structural protein 4A; it reads PPCRP. Residues 2193 to 2215 are disordered; the sequence is ARRLARGSPPSEASSSASQLSAP. Positions 2195-2448 are interaction with host SKP2; that stretch reads RLARGSPPSE…ALITPCSAEE (254 aa). Phosphoserine; by host is present on residues Ser-2200, Ser-2203, Ser-2207, Ser-2210, Ser-2213, and Ser-2216. Residues 2200–2215 are compositionally biased toward low complexity; that stretch reads SPPSEASSSASQLSAP. Residues 2216-2255 form an ISDR region; the sequence is SLKATCQTHRPHPDAELVDANLLWRQEMGSNITRVESETK. The interaction with EIF2AK2/PKR stretch occupies residues 2216–2281; sequence SLKATCQTHR…AELSAAAECF (66 aa). Residues 2255 to 2312 form an NS4B-binding region; the sequence is KVVILDSFEPLRAETDDAELSAAAECFKKPPKYPPALPIWARPDYNPPLLDRWKSPDY. The segment at 2305–2383 is V3; that stretch reads DRWKSPDYVP…DTQSSTASKV (79 aa). 2 disordered regions span residues 2318–2338 and 2356–2419; these read HGCA…RKRT and KSFP…WSTV. The SH3-binding motif lies at 2328-2331; that stretch reads PPVP. The short motif at 2333 to 2341 is the Nuclear localization signal element; it reads PRRKRTIQL. Residue Lys-2356 forms a Glycyl lysine isopeptide (Lys-Gly) (interchain with G-Cter in ubiquitin) linkage. The segment covering 2359–2381 has biased composition (low complexity); it reads PSSKPQEENSSSSGVDTQSSTAS. 2 positions are modified to phosphoserine; by host: Ser-2459 and Ser-2472. The 119-residue stretch at 2644–2762 folds into the RdRp catalytic domain; that stretch reads PLGFSYDTRC…VAESDGVDED (119 aa). Mg(2+) is bound by residues Asp-2650, Asp-2748, and Asp-2749. A helical membrane pass occupies residues 3001-3021; sequence YLLLCLLLLTVGVGIFLLPAR.

This sequence belongs to the hepacivirus polyprotein family. In terms of assembly, homooligomer. Interacts with E1 (via C-terminus). Interacts with the non-structural protein 5A. Interacts (via N-terminus) with host STAT1 (via SH2 domain); this interaction results in decreased STAT1 phosphorylation and ubiquitin-mediated proteasome-dependent STAT1 degradation, leading to decreased IFN-stimulated gene transcription. Interacts with host STAT3; this interaction constitutively activates STAT3. Interacts with host LTBR receptor. Interacts with host TNFRSF1A receptor and possibly induces apoptosis. Interacts with host HNRPK. Interacts with host YWHAE. Interacts with host UBE3A/E6AP. Interacts with host DDX3X. Interacts with host APOA2. Interacts with host RXRA protein. Interacts with host SP110 isoform 3/Sp110b; this interaction sequesters the transcriptional corepressor SP110 away from the nucleus. Interacts with host CREB3 nuclear transcription protein; this interaction triggers cell transformation. Interacts with host ACY3. Interacts with host C1QR1. Interacts with host RBM24; this interaction, which enhances the interaction of the mature core protein with 5'-UTR, may inhibit viral translation and favor replication. Interacts with host EIF2AK2/PKR; this interaction induces the autophosphorylation of EIF2AK2. Part of the viral assembly initiation complex composed of NS2, E1, E2, NS3, NS4A, NS5A and the mature core protein. Forms a heterodimer with envelope glycoprotein E2. Interacts with mature core protein. Interacts with protease NS2. The heterodimer E1/E2 interacts with host CLDN1; this interaction plays a role in viral entry into host cell. Interacts with host SPSB2 (via C-terminus). Part of the viral assembly initiation complex composed of NS2, E1, E2, NS3, NS4A, NS5A and the mature core protein. Interacts with host NEURL3; this interaction prevents E1 binding to glycoprotein E2. As to quaternary structure, forms a heterodimer with envelope glycoprotein E1. Interacts with host CD81 and SCARB1 receptors; these interactions play a role in viral entry into host cell. Interacts with host EIF2AK2/PKR; this interaction inhibits EIF2AK2 and probably allows the virus to evade the innate immune response. Interacts with host CD209/DC-SIGN and CLEC4M/DC-SIGNR. Interact with host SPCS1; this interaction is essential for viral particle assembly. Interacts with protease NS2. The heterodimer E1/E2 interacts with host CLDN1; this interaction plays a role in viral entry into host cell. Part of the viral assembly initiation complex composed of NS2, E1, E2, NS3, NS4A, NS5A and the mature core protein. Interacts with host SLC3A2/4F2hc; the interaction may facilitate viral entry into host cell. Interacts with human PLSCR1. In terms of assembly, homohexamer. Homoheptamer. Interacts with protease NS2. Homodimer. Interacts with host SPCS1; this interaction is essential for viral particle assembly. Interacts with envelope glycoprotein E1. Interacts with envelope glycoprotein E2. Interacts with viroporin p7. Interacts with serine protease/helicase NS3. Part of the replication complex composed of NS2, NS3, NS4A, NS4B, NS5A and the RNA-directed RNA polymerase embedded in an ER-derived membranous web. Part of the viral assembly initiation complex composed of NS2, E1, E2, NS3, NS4A, NS5A and the mature core protein. As to quaternary structure, interacts with protease NS2. Interacts with non-structural protein 4A; this interaction stabilizes the folding of NS3 serine protease. NS3-NS4A interaction is essential for NS3 activation and allows membrane anchorage of the latter. NS3/NS4A complex also prevents phosphorylation of host IRF3, thus preventing the establishment of dsRNA induced antiviral state. Interacts with host MAVS; this interaction leads to the cleavage and inhibition of host MAVS. Interacts with host TICAM1; this interaction leads to the cleavage and inhibition of host TICAM1. Interacts with host TANK-binding kinase/TBK1; this interaction results in the inhibition of the association between TBK1 and IRF3, which leads to the inhibition of IRF3 activation. Interacts with host RBM24. Part of the replication complex composed of NS2, NS3, NS4A, NS4B, NS5A and the RNA-directed RNA polymerase embedded in an ER-derived membranous web. Part of the viral assembly initiation complex composed of NS2, E1, E2, NS3, NS4A, NS5A and the mature core protein. In terms of assembly, interacts with NS3 serine protease; this interaction stabilizes the folding of NS3 serine protease. NS3-NS4A interaction is essential for NS3 activation and allows membrane anchorage of the latter. Interacts with non-structural protein 5A (via N-terminus). Part of the replication complex composed of NS2, NS3, NS4A, NS4B, NS5A and the RNA-directed RNA polymerase embedded in an ER-derived membranous web. Part of the viral assembly initiation complex composed of NS2, E1, E2, NS3, NS4A, NS5A and the mature core protein. Homomultimer. Interacts with non-structural protein NS5A. Interacts with host PLA2G4C; this interaction likely initiates the recruitment of replication complexes to lipid droplets. Interacts with host STING; this interaction disrupts the interaction between STING and TBK1 thereby suppressing the interferon signaling. Part of the replication complex composed of NS2, NS3, NS4A, NS4B, NS5A and the RNA-directed RNA polymerase embedded in an ER-derived membranous web. As to quaternary structure, monomer. Homodimer; dimerization is required for RNA-binding. Interacts with the mature core protein. Interacts (via N-terminus) with non-structural protein 4A. Interacts with non-structural protein 4B. Interacts (via region D2) with RNA-directed RNA polymerase. Part of the viral assembly initiation complex composed of NS2, E1, E2, NS3, NS4A, NS5A and the mature core protein. Part of the replication complex composed of NS2, NS3, NS4A, NS4B, NS5A and the RNA-directed RNA polymerase embedded in an ER-derived membranous web. Interacts with host GRB2. Interacts with host BIN1. Interacts with host PIK3R1. Interacts with host SRCAP. Interacts with host FKBP8. Interacts (via C-terminus) with host VAPB (via MSP domain). Interacts with host EIF2AK2/PKR; this interaction leads to disruption of EIF2AK2 dimerization by NS5A and probably allows the virus to evade the innate immune response. Interacts (via N-terminus) with host PACSIN2 (via N-terminus); this interaction attenuates protein kinase C alpha-mediated phosphorylation of PACSIN2 by disrupting the interaction between PACSIN2 and PRKCA. Interacts (via N-terminus) with host SRC kinase (via SH2 domain). Interacts with most Src-family kinases. Interacts with host IFI27 and SKP2; promotes the ubiquitin-mediated proteasomal degradation of NS5A. Interacts with host GPS2. Interacts with host TNFRSF21; this interaction allows the modulation by the virus of JNK, p38 MAPK, STAT3, and Akt signaling pathways in a DR6-dependent manner. Interacts (via N-terminus) with host CIDEB (via N-terminus); this interaction seems to regulate the association of HCV particles with APOE. Interacts with host CHKA/Choline Kinase-alpha; CHKA bridges host PI4KA and NS5A and potentiates NS5A-stimulated PI4KA activity, which then facilitates the targeting of the ternary complex to the ER for viral replication. Interacts with host SPSB2 (via C-terminus); this interaction targets NS5A for ubiquitination and degradation. Interacts with host RAB18; this interaction may promote the association of NS5A and other replicase components with lipid droplets. Interacts (via region D2) with host PPIA/CYPA; the interaction stimulates RNA-binding ability of NS5A and is dependent on the peptidyl-prolyl cis-trans isomerase activity of PPIA/CYPA. Interacts with host TRIM14; this interaction induces the degradation of NS5A. In terms of assembly, homooligomer. Interacts with non-structural protein 5A. Interacts with host VAPB. Interacts with host PRK2/PKN2. Interacts with host HNRNPA1 and SEPT6; these interactions facilitate viral replication. Part of the replication complex composed of NS2, NS3, NS4A, NS4B, NS5A and the RNA-directed RNA polymerase. The cofactor is Zn(2+). Mg(2+) serves as cofactor. Specific enzymatic cleavages in vivo yield mature proteins. The structural proteins, core, E1, E2 and p7 are produced by proteolytic processing by host signal peptidases. The core protein precursor is synthesized as a 23 kDa, which is retained in the ER membrane through the hydrophobic signal peptide. Cleavage by the signal peptidase releases the 21 kDa mature core protein. The cleavage of the core protein precursor occurs between aminoacids 176 and 188 but the exact cleavage site is not known. Some degraded forms of the core protein appear as well during the course of infection. The other proteins (p7, NS2, NS3, NS4A, NS4B, NS5A and NS5B) are cleaved by the viral proteases. Autoprocessing between NS2 and NS3 is mediated by the NS2 cysteine protease catalytic domain and regulated by the NS3 N-terminal domain. Post-translationally, phosphorylated by host PKC and PKA. In terms of processing, ubiquitinated; mediated by UBE3A and leading to core protein subsequent proteasomal degradation. Highly N-glycosylated. Post-translationally, palmitoylation is required for NS2/3 autoprocessing and E2 recruitment to membranes. In terms of processing, palmitoylated. This modification may play a role in its polymerization or in protein-protein interactions. Phosphorylated on serines in a basal form termed p56. p58 is a hyperphosphorylated form of p56. p56 and p58 coexist in the cell in roughly equivalent amounts. Hyperphosphorylation is dependent on the presence of NS4A. Host CSNK1A1/CKI-alpha or RPS6KB1 kinases may be responsible for NS5A phosphorylation. Post-translationally, tyrosine phosphorylation is essential for the interaction with host SRC. In terms of processing, ubiquitinated. Ubiquitination, most probably at Lys-2356, mediated by host IFI27 and SKP2 leads to proteasomal degradation, restricting viral infection. Ubiquitination by host TRIM22 leads to interruption of viral replication. The N-terminus is phosphorylated by host PRK2/PKN2.

It is found in the host endoplasmic reticulum membrane. The protein resides in the host mitochondrion membrane. The protein localises to the virion. It localises to the host cytoplasm. Its subcellular location is the host nucleus. It is found in the host lipid droplet. The protein resides in the virion membrane. The protein localises to the host mitochondrion. It localises to the host cell membrane. Its subcellular location is the host perinuclear region. It catalyses the reaction Hydrolysis of four peptide bonds in the viral precursor polyprotein, commonly with Asp or Glu in the P6 position, Cys or Thr in P1 and Ser or Ala in P1'.. The enzyme catalyses a ribonucleoside 5'-triphosphate + H2O = a ribonucleoside 5'-diphosphate + phosphate + H(+). The catalysed reaction is ATP + H2O = ADP + phosphate + H(+). It carries out the reaction RNA(n) + a ribonucleoside 5'-triphosphate = RNA(n+1) + diphosphate. Its activity is regulated as follows. Inhibited by the antiviral drug hexamethylene amiloride. Inhibition by amantadine appears to be genotype-dependent. Also inhibited by long-alkyl-chain iminosugar derivatives. Activity is up-regulated by PRK2/PKN2-mediated phosphorylation. Its function is as follows. Packages viral RNA to form a viral nucleocapsid, and promotes virion budding. Participates in the viral particle production as a result of its interaction with the non-structural protein 5A. Binds RNA and may function as a RNA chaperone to induce the RNA structural rearrangements taking place during virus replication. Modulates viral translation initiation by interacting with viral IRES and 40S ribosomal subunit. Affects various cell signaling pathways, host immunity and lipid metabolism. Prevents the establishment of cellular antiviral state by blocking the interferon-alpha/beta (IFN-alpha/beta) and IFN-gamma signaling pathways and by blocking the formation of phosphorylated STAT1 and promoting ubiquitin-mediated proteasome-dependent degradation of STAT1. Activates STAT3 leading to cellular transformation. Regulates the activity of cellular genes, including c-myc and c-fos. May repress the promoter of p53, and sequester CREB3 and SP110 isoform 3/Sp110b in the cytoplasm. Represses cell cycle negative regulating factor CDKN1A, thereby interrupting an important check point of normal cell cycle regulation. Targets transcription factors involved in the regulation of inflammatory responses and in the immune response: suppresses TNF-induced NF-kappa-B activation, and activates AP-1. Binds to dendritic cells (DCs) via C1QR1, resulting in down-regulation of T-lymphocytes proliferation. Alters lipid metabolism by interacting with hepatocellular proteins involved in lipid accumulation and storage. Induces up-regulation of FAS promoter activity, and thereby contributes to the increased triglyceride accumulation in hepatocytes (steatosis). Forms a heterodimer with envelope glycoprotein E2, which mediates virus attachment to the host cell, virion internalization through clathrin-dependent endocytosis and fusion with host membrane. Fusion with the host cell is most likely mediated by both E1 and E2, through conformational rearrangements of the heterodimer required for fusion rather than a classical class II fusion mechanism. E1/E2 heterodimer binds host apolipoproteins such as APOB and ApoE thereby forming a lipo-viro-particle (LVP). APOE associated to the LVP allows the initial virus attachment to cell surface receptors such as the heparan sulfate proteoglycans (HSPGs), syndecan-1 (SDC1), syndecan-1 (SDC2), the low-density lipoprotein receptor (LDLR) and scavenger receptor class B type I (SCARB1). The cholesterol transfer activity of SCARB1 allows E2 exposure and binding of E2 to SCARB1 and the tetraspanin CD81. E1/E2 heterodimer binding on CD81 activates the epithelial growth factor receptor (EGFR) signaling pathway. Diffusion of the complex E1-E2-EGFR-SCARB1-CD81 to the cell lateral membrane allows further interaction with Claudin 1 (CLDN1) and occludin (OCLN) to finally trigger HCV entry. Functionally, forms a heterodimer with envelope glycoprotein E1, which mediates virus attachment to the host cell, virion internalization through clathrin-dependent endocytosis and fusion with host membrane. Fusion with the host cell is most likely mediated by both E1 and E2, through conformational rearrangements of the heterodimer required for fusion rather than a classical class II fusion mechanism. The interaction between envelope glycoprotein E2 and host apolipoprotein E/APOE allows the proper assembly, maturation and infectivity of the viral particles. This interaction is probably promoted via the up-regulation of cellular autophagy by the virus. E1/E2 heterodimer binds host apolipoproteins such as APOB and APOE thereby forming a lipo-viro-particle (LVP). APOE associated to the LVP allows the initial virus attachment to cell surface receptors such as the heparan sulfate proteoglycans (HSPGs), syndecan-1 (SDC1), syndecan-1 (SDC2), the low-density lipoprotein receptor (LDLR) and scavenger receptor class B type I (SCARB1). The cholesterol transfer activity of SCARB1 allows E2 exposure and binding of E2 to SCARB1 and the tetraspanin CD81. E1/E2 heterodimer binding on CD81 activates the epithelial growth factor receptor (EGFR) signaling pathway. Diffusion of the complex E1-E2-EGFR-SCARB1-CD81 to the cell lateral membrane allows further interaction with Claudin 1 (CLDN1) and occludin (OCLN) to finally trigger HCV entry. Inhibits host EIF2AK2/PKR activation, preventing the establishment of an antiviral state. Viral ligand for CD209/DC-SIGN and CLEC4M/DC-SIGNR, which are respectively found on dendritic cells (DCs), and on liver sinusoidal endothelial cells and macrophage-like cells of lymph node sinuses. These interactions allow the capture of circulating HCV particles by these cells and subsequent facilitated transmission to permissive cells such as hepatocytes and lymphocyte subpopulations. The interaction between E2 and host amino acid transporter complex formed by SLC3A2 and SLC7A5/LAT1 may facilitate viral entry into host cell. In terms of biological role, ion channel protein that acts as a viroporin and plays an essential role in the assembly, envelopment and secretion of viral particles. Regulates the host cell secretory pathway, which induces the intracellular retention of viral glycoproteins and favors assembly of viral particles. Creates a pore in acidic organelles and releases Ca(2+) and H(+) in the cytoplasm of infected cells, leading to a productive viral infection. High levels of cytoplasmic Ca(2+) may trigger membrane trafficking and transport of viral ER-associated proteins to viroplasms, sites of viral genome replication. This ionic imbalance induces the assembly of the inflammasome complex, which triggers the maturation of pro-IL-1beta into IL-1beta through the action of caspase-1. Targets also host mitochondria and induces mitochondrial depolarization. In addition of its role as a viroporin, acts as a lipid raft adhesion factor. Its function is as follows. Cysteine protease required for the proteolytic auto-cleavage between the non-structural proteins NS2 and NS3. The N-terminus of NS3 is required for the function of NS2 protease (active region NS2-3). Promotes the initiation of viral particle assembly by mediating the interaction between structural and non-structural proteins. Displays three enzymatic activities: serine protease with a chymotrypsin-like fold, NTPase and RNA helicase. NS3 serine protease, in association with NS4A, is responsible for the cleavages of NS3-NS4A, NS4A-NS4B, NS4B-NS5A and NS5A-NS5B. The NS3/NS4A complex prevents phosphorylation of host IRF3, thus preventing the establishment of dsRNA induced antiviral state. The NS3/NS4A complex induces host amino acid transporter component SLC3A2, thus contributing to HCV propagation. NS3 RNA helicase binds to RNA and unwinds both dsDNA and dsRNA in the 3' to 5' direction, and likely resolves RNA complicated stable secondary structures in the template strand. Binds a single ATP and catalyzes the unzipping of a single base pair of dsRNA. Inhibits host antiviral proteins TBK1 and IRF3 thereby preventing the establishment of an antiviral state. Cleaves host MAVS/CARDIF thereby preventing the establishment of an antiviral state. Cleaves host TICAM1/TRIF, thereby disrupting TLR3 signaling and preventing the establishment of an antiviral state. Functionally, peptide cofactor which forms a non-covalent complex with the N-terminal of NS3 serine protease. The NS3/NS4A complex prevents phosphorylation of host IRF3, thus preventing the establishment of dsRNA induced antiviral state. The NS3/NS4A complex induces host amino acid transporter component SLC3A2, thus contributing to HCV propagation. In terms of biological role, induces a specific membrane alteration that serves as a scaffold for the virus replication complex. This membrane alteration gives rise to the so-called ER-derived membranous web that contains the replication complex. NS4B self-interaction contributes to its function in membranous web formation. Promotes host TRIF protein degradation in a CASP8-dependent manner thereby inhibiting host TLR3-mediated interferon signaling. Disrupts the interaction between STING and TBK1 contributing to the inhibition of interferon signaling. Its function is as follows. Phosphorylated protein that is indispensable for viral replication and assembly. Both hypo- and hyperphosphorylated states are required for the viral life cycle. The hyperphosphorylated form of NS5A is an inhibitor of viral replication. Involved in RNA-binding and especially in binding to the viral genome. Zinc is essential for RNA-binding. Participates in the viral particle production as a result of its interaction with the mature viral core protein. Its interaction with host VAPB may target the viral replication complex to vesicles. Down-regulates viral IRES translation initiation. Mediates interferon resistance, presumably by interacting with and inhibiting host EIF2AK2/PKR. Prevents BIN1-induced apoptosis. Acts as a transcriptional activator of some host genes important for viral replication when localized in the nucleus. Via the interaction with host PACSIN2, modulates lipid droplet formation in order to promote virion assembly. Modulates TNFRSF21/DR6 signaling pathway for viral propagation. RNA-dependent RNA polymerase that performs primer-template recognition and RNA synthesis during viral replication. Initiates RNA transcription/replication at a flavin adenine dinucleotide (FAD), resulting in a 5'- FAD cap on viral RNAs. In this way, recognition of viral 5' RNA by host pattern recognition receptors can be bypassed, thereby evading activation of antiviral pathways. The polypeptide is Genome polyprotein (Homo sapiens (Human)).